We begin with the raw amino-acid sequence, 340 residues long: Fructose-1,6-bisphosphatase class 1 (340 aa).

4 residues coordinate Mg(2+): glutamate 107, aspartate 126, leucine 128, and aspartate 129. Asparagine 215 is a binding site for substrate. Glutamate 287 contacts Mg(2+).

It belongs to the FBPase class 1 family. Homotetramer. Requires Mg(2+) as cofactor.

It is found in the cytoplasm. The enzyme catalyses beta-D-fructose 1,6-bisphosphate + H2O = beta-D-fructose 6-phosphate + phosphate. It functions in the pathway carbohydrate biosynthesis; gluconeogenesis. The sequence is that of Fructose-1,6-bisphosphatase class 1 from Brucella suis (strain ATCC 23445 / NCTC 10510).